The chain runs to 406 residues: Arginine deiminase (406 aa).

C396 (amidino-cysteine intermediate) is an active-site residue.

Belongs to the arginine deiminase family.

Its subcellular location is the cytoplasm. It carries out the reaction L-arginine + H2O = L-citrulline + NH4(+). The protein operates within amino-acid degradation; L-arginine degradation via ADI pathway; carbamoyl phosphate from L-arginine: step 1/2. The sequence is that of Arginine deiminase from Aliivibrio fischeri (strain ATCC 700601 / ES114) (Vibrio fischeri).